A 189-amino-acid polypeptide reads, in one-letter code: GTPase NRas (189 aa).

Residues 10–18 and 29–30 each bind GTP; these read GAGGVGKSA and VD. Residues 32-40 carry the Effector region motif; it reads YDPTIEDSY. 57 to 61 is a GTP binding site; that stretch reads DTAGQ. S89 is modified (phosphoserine). 116 to 119 lines the GTP pocket; it reads NKCD. Positions 166 to 185 are hypervariable region; the sequence is YRMKKLNSSDDGTQGCMGLP. A Glycyl lysine isopeptide (Lys-Gly) (interchain with G-Cter in ubiquitin) cross-link involves residue K170. Residue C181 is the site of S-palmitoyl cysteine attachment. A lipid anchor (S-farnesyl cysteine) is attached at C186. Residues 187–189 constitute a propeptide, removed in mature form; sequence VVM.

Belongs to the small GTPase superfamily. Ras family. In terms of assembly, interacts (active GTP-bound form preferentially) with RGS14. Interacts (active GTP-bound form) with RASSF7. Interacts (active GTP-bound form) with both SHOC2 and PP1c (all isoforms) to form a tertiary complex; SHOC2 and PP1c preferably bind M-Ras/MRAS, but they also bind K-Ras/KRAS, N-Ras/NRAS and H-Ras/HRAS. In terms of processing, palmitoylated by the ZDHHC9-GOLGA7 complex. Depalmitoylated by ABHD17A, ABHD17B and ABHD17C. A continuous cycle of de- and re-palmitoylation regulates rapid exchange between plasma membrane and Golgi. Post-translationally, acetylation at Lys-104 prevents interaction with guanine nucleotide exchange factors (GEFs). Ubiquitinated by the BCR(LZTR1) E3 ubiquitin ligase complex at Lys-170 in a non-degradative manner, leading to inhibit Ras signaling by decreasing Ras association with membranes. In terms of processing, phosphorylation at Ser-89 enhances NRAS association with its downstream effectors.

It localises to the cell membrane. It is found in the golgi apparatus membrane. It catalyses the reaction GTP + H2O = GDP + phosphate + H(+). With respect to regulation, alternates between an inactive form bound to GDP and an active form bound to GTP. Activated by a guanine nucleotide-exchange factor (GEF) and inactivated by a GTPase-activating protein (GAP). Ras proteins bind GDP/GTP and possess intrinsic GTPase activity. The protein is GTPase NRas (NRAS) of Pongo abelii (Sumatran orangutan).